A 411-amino-acid chain; its full sequence is LL-diaminopimelate aminotransferase (411 aa).

Residues Tyr15 and Gly42 each coordinate substrate. Pyridoxal 5'-phosphate contacts are provided by residues Tyr72, 108–109 (SK), Tyr132, Asn187, Tyr218, and 246–248 (SFS). The substrate site is built by Lys109, Tyr132, and Asn187. Residue Lys249 is modified to N6-(pyridoxal phosphate)lysine. Pyridoxal 5'-phosphate is bound by residues Arg257 and Asn292. Substrate contacts are provided by Asn292 and Arg388.

It belongs to the class-I pyridoxal-phosphate-dependent aminotransferase family. LL-diaminopimelate aminotransferase subfamily. In terms of assembly, homodimer. The cofactor is pyridoxal 5'-phosphate.

The catalysed reaction is (2S,6S)-2,6-diaminopimelate + 2-oxoglutarate = (S)-2,3,4,5-tetrahydrodipicolinate + L-glutamate + H2O + H(+). The protein operates within amino-acid biosynthesis; L-lysine biosynthesis via DAP pathway; LL-2,6-diaminopimelate from (S)-tetrahydrodipicolinate (aminotransferase route): step 1/1. Functionally, involved in the synthesis of meso-diaminopimelate (m-DAP or DL-DAP), required for both lysine and peptidoglycan biosynthesis. Catalyzes the direct conversion of tetrahydrodipicolinate to LL-diaminopimelate. This is LL-diaminopimelate aminotransferase from Synechococcus elongatus (strain ATCC 33912 / PCC 7942 / FACHB-805) (Anacystis nidulans R2).